A 747-amino-acid polypeptide reads, in one-letter code: ESX-1 secretion system protein EccCa1 (747 aa).

3 helical membrane passes run 41–61, 65–85, and 222–242; these read ILPY…VAGG, LSPY…GGLA, and FPTI…TAMI. Positions 456–665 constitute a FtsK domain; that stretch reads GNVMYLDIKE…LRTTSSHESK (210 aa). 479–486 contributes to the ATP binding site; the sequence is GTTGSGKS.

As to quaternary structure, part of the ESX-1 / type VII secretion system (T7SS), which is composed of cytosolic and membrane components. The ESX-1 membrane complex is composed of EccB1, EccCa1, EccCb1, EccD1 and EccE1.

The protein localises to the cell inner membrane. Its function is as follows. Part of the ESX-1 specialized secretion system, which delivers several virulence factors to host cells during infection, including the key virulence factors EsxA (ESAT-6) and EsxB (CFP-10). This Mycobacterium tuberculosis (strain CDC 1551 / Oshkosh) protein is ESX-1 secretion system protein EccCa1.